The chain runs to 221 residues: MYLENCIVILTSTTPPWWAIPPAWSLGAEIQAYFLLPILLTYKMLGLSVFWISYIIYSLANLNIIHSDYFGYRLIPGVIFMFLSGAYLQKIVSGKASRLEMLSLIIIYIISLFWLVFFIIIKGKYGAYTRETLLGLLVGIPLVYTLLKIRRKFYFNDLFGKLSYGIFLSHFLSFWILEFVNLTQNIISMIFLSLIISASVSYLIITLIENKVEKIRYNLTR.

6 consecutive transmembrane segments (helical) span residues 33–55 (YFLLPILLTYKMLGLSVFWISYI), 70–92 (FGYRLIPGVIFMFLSGAYLQKIV), 99–121 (LEMLSLIIIYIISLFWLVFFIII), 125–147 (YGAYTRETLLGLLVGIPLVYTLL), 154–176 (YFNDLFGKLSYGIFLSHFLSFWI), and 186–208 (IISMIFLSLIISASVSYLIITLI).

The protein resides in the cell membrane. This is an uncharacterized protein from Aquifex aeolicus (strain VF5).